The primary structure comprises 249 residues: Triosephosphate isomerase (249 aa).

Residue 11–13 (NWK) coordinates substrate. The active-site Electrophile is His-91. Glu-163 acts as the Proton acceptor in catalysis. Residues Gly-169, Ser-208, and 229-230 (GG) each bind substrate.

This sequence belongs to the triosephosphate isomerase family. In terms of assembly, homodimer.

The protein localises to the cytoplasm. It catalyses the reaction D-glyceraldehyde 3-phosphate = dihydroxyacetone phosphate. The protein operates within carbohydrate biosynthesis; gluconeogenesis. It functions in the pathway carbohydrate degradation; glycolysis; D-glyceraldehyde 3-phosphate from glycerone phosphate: step 1/1. Its function is as follows. Involved in the gluconeogenesis. Catalyzes stereospecifically the conversion of dihydroxyacetone phosphate (DHAP) to D-glyceraldehyde-3-phosphate (G3P). This chain is Triosephosphate isomerase, found in Pseudoalteromonas translucida (strain TAC 125).